We begin with the raw amino-acid sequence, 69 residues long: Cold shock-like protein CspC (69 aa).

A CSD domain is found at 6 to 66 (GQVKWFNESK…GQKGPAAVNV (61 aa)).

It is found in the cytoplasm. The sequence is that of Cold shock-like protein CspC (cspC) from Escherichia coli O157:H7.